A 285-amino-acid chain; its full sequence is ATP synthase gamma chain (285 aa).

The protein belongs to the ATPase gamma chain family. F-type ATPases have 2 components, CF(1) - the catalytic core - and CF(0) - the membrane proton channel. CF(1) has five subunits: alpha(3), beta(3), gamma(1), delta(1), epsilon(1). CF(0) has three main subunits: a, b and c.

It is found in the cell inner membrane. Its function is as follows. Produces ATP from ADP in the presence of a proton gradient across the membrane. The gamma chain is believed to be important in regulating ATPase activity and the flow of protons through the CF(0) complex. This chain is ATP synthase gamma chain, found in Protochlamydia amoebophila (strain UWE25).